Here is a 391-residue protein sequence, read N- to C-terminus: Ectodysplasin-A (391 aa).

Positions 1 to 21 (MGYPEVERREPLPAAAPRERG) are enriched in basic and acidic residues. Positions 1-28 (MGYPEVERREPLPAAAPRERGSQGCGCR) are disordered. Topologically, residues 1–41 (MGYPEVERREPLPAAAPRERGSQGCGCRGAPARAGEGNSCR) are cytoplasmic. A helical; Signal-anchor for type II membrane protein membrane pass occupies residues 42 to 62 (LFLGFFGLSLALHLLTLCCYL). Residues 63–391 (ELRSELRRER…AIRLGEAPAS (329 aa)) are Extracellular-facing. Disordered regions lie at residues 72–129 (RGTE…DSQD) and 146–244 (YSEE…TGTR). Residues 86–96 (TSGTLSSPGSL) show a composition bias toward low complexity. Residues 180–229 (GPPGPNGPPGPPGPPGPQGPPGIPGIPGIPGTTVMGPPGPPGPPGPQGPP) form the Collagen-like domain. 2 stretches are compositionally biased toward pro residues: residues 181–203 (PPGP…PGIP) and 216–228 (PPGP…PQGP). The THD domain occupies 249–385 (AVVHLQGQGS…HTTFFGAIRL (137 aa)). N313 carries an N-linked (GlcNAc...) asparagine glycan. Residues C332 and C346 are joined by a disulfide bond. An N-linked (GlcNAc...) asparagine glycan is attached at N372.

Belongs to the tumor necrosis factor family. Homotrimer. The homotrimers may then dimerize and form higher-order oligomers. N-glycosylated. Post-translationally, processing by furin produces a secreted form.

The protein resides in the cell membrane. Its subcellular location is the secreted. In terms of biological role, cytokine which is involved in epithelial-mesenchymal signaling during morphogenesis of ectodermal organs. Functions as a ligand activating the DEATH-domain containing receptors EDAR and EDA2R. Isoform TAA binds only to the receptor EDAR, while isoform TA-A2 binds exclusively to the receptor EDA2R. May also play a role in cell adhesion. Its function is as follows. Isoform TAA binds only to the receptor EDAR, while isoform TA-A2 binds exclusively to the receptor EDA2R. Functionally, isoform TA-A2 binds exclusively to the receptor EDA2R. This Mus musculus (Mouse) protein is Ectodysplasin-A (Eda).